We begin with the raw amino-acid sequence, 982 residues long: Coatomer subunit beta (982 aa).

HEAT repeat units follow at residues 16-53 (SGAP…NGEP), 130-167 (ELVE…RFPE), 241-278 (YDKG…SPTA), and 317-352 (LQDS…NQNS).

As to quaternary structure, oligomeric complex that consists of at least the alpha, beta, beta', gamma, delta, epsilon and zeta subunits.

Its subcellular location is the cytoplasm. The protein localises to the golgi apparatus membrane. It localises to the cytoplasmic vesicle. The protein resides in the COPI-coated vesicle membrane. Functionally, the coatomer is a cytosolic protein complex that binds to dilysine motifs and reversibly associates with Golgi non-clathrin-coated vesicles, which further mediate biosynthetic protein transport from the ER, via the Golgi up to the trans Golgi network. Coatomer complex is required for budding from Golgi membranes, and is essential for the retrograde Golgi-to-ER transport of dilysine-tagged proteins. This Trypanosoma brucei brucei protein is Coatomer subunit beta.